Consider the following 524-residue polypeptide: MPLLSLSWLGLGHTAASPWLLLLLVGASCLLAYILPQVYAVFENSRRLRRFPQPPPRNWLFGHLGLIQSSEEGLLYIQSLSRTFRDVCCWWVGPWHPVIRIFHPAFIKPVILAPASVAPKDRVFYRFLRPWLGDGLLLSTGDKWSRHRRMLTPAFHFNILKPYVKIFNDSTNIMHAKWQRLASQGSARLDMFEHISLMTLDSLQKCVFSFDSNCQEKPSEYITAILELSALVARRHQSLLLHVDLFYHLTRDGMRFRKACRLVHDFTDAVIRERRCTLPDQGGDDALKAKAKAKTLDFIDVLLLSKDEHGEALSDEDIRAEADTFMFGGHDTTASGLSWILYNLAKHPEYQERCRQEVRELLRDREPEEIEWDDLAQLPFLTMCIKESLRLHPPATAISRCCTQDIMLPDGRVIPKGVICRISIFGTHHNPAVWPDPEVYNPFRFDADNGKGRSPLAFIPFSAGPRNCIGQTFAMSEMKVALALTLLRFRVLPDDKEPRRKPELILRAEGGLWLRVEPLSAGAH.

A helical transmembrane segment spans residues 15–35 (AASPWLLLLLVGASCLLAYIL). Cys-468 serves as a coordination point for heme.

This sequence belongs to the cytochrome P450 family. The cofactor is heme.

Its subcellular location is the endoplasmic reticulum membrane. It localises to the microsome membrane. It carries out the reaction leukotriene B4 + reduced [NADPH--hemoprotein reductase] + O2 = 18-hydroxy-leukotriene B4 + oxidized [NADPH--hemoprotein reductase] + H2O + H(+). The catalysed reaction is leukotriene B4 + reduced [NADPH--hemoprotein reductase] + O2 = 19-hydroxy-leukotriene B4 + oxidized [NADPH--hemoprotein reductase] + H2O + H(+). It participates in lipid metabolism; leukotriene B4 degradation. In terms of biological role, a cytochrome P450 monooxygenase involved in the metabolism of the pro-inflammatory lipid mediator leukotriene B4 (LTB4). Hydroxylates at the omega-1 and omega-2 positions LTB4. This oxidation step leads to LTB4 inactivation, which is postulated to be a crucial part of the resolution of inflammation. Mechanistically, uses molecular oxygen inserting one oxygen atom into a substrate, and reducing the second into a water molecule, with two electrons provided by NADPH via cytochrome P450 reductase (CPR; NADPH-ferrihemoprotein reductase). This Rattus norvegicus (Rat) protein is Cytochrome P450 4F3.